The primary structure comprises 65 residues: Large ribosomal subunit protein uL30 (65 aa).

The protein belongs to the universal ribosomal protein uL30 family. Part of the 50S ribosomal subunit.

This is Large ribosomal subunit protein uL30 from Brucella suis (strain ATCC 23445 / NCTC 10510).